Consider the following 105-residue polypeptide: Nitrogenase-stabilizing/protective protein NifW 2 (105 aa).

Belongs to the NifW family.

May protect the nitrogenase Fe-Mo protein from oxidative damage. In Trichormus variabilis (strain ATCC 29413 / PCC 7937) (Anabaena variabilis), this protein is Nitrogenase-stabilizing/protective protein NifW 2 (nifW2).